Reading from the N-terminus, the 174-residue chain is Keratin-associated protein 9-2 (174 aa).

17 consecutive repeat copies span residues 8-12, 13-17, 18-22, 37-41, 42-46, 51-55, 61-65, 66-70, 75-79, 80-84, 85-89, 90-94, 95-99, 144-148, 149-153, 154-158, and 168-172. The 17 X 5 AA repeats of C-C-[RQVSGE]-[SPTQ]-[TASP] stretch occupies residues 8–172; sequence CCQPTCCRTT…TCVSSCCQPS (165 aa).

Belongs to the KRTAP type 9 family. In terms of assembly, interacts with hair keratins.

Its function is as follows. In the hair cortex, hair keratin intermediate filaments are embedded in an interfilamentous matrix, consisting of hair keratin-associated proteins (KRTAP), which are essential for the formation of a rigid and resistant hair shaft through their extensive disulfide bond cross-linking with abundant cysteine residues of hair keratins. The matrix proteins include the high-sulfur and high-glycine-tyrosine keratins. In Homo sapiens (Human), this protein is Keratin-associated protein 9-2 (KRTAP9-2).